The primary structure comprises 531 residues: DNA damage-binding protein cmr1 (531 aa).

Disordered regions lie at residues 37–83 (GIFP…RGIA) and 218–264 (DASQ…MHIH). A compositionally biased stretch (basic residues) spans 53-64 (KPKKKPAPKKIK). A WD 1 repeat occupies 186–227 (VTPERIYTMTFHPSEAKPLIFAGDKMGNLGVLDASQERPVSS). Residues 233-245 (GDEEEQEDDDDPD) show a composition bias toward acidic residues. 6 WD repeats span residues 253-293 (PHTR…SVET), 300-340 (SDDV…RTAV), 345-385 (LSEK…HDDP), 392-431 (LSRLSVSHAAFNSAGQVATSSYDDSLKIYDFGAKGIASWE), 454-497 (GRWV…LAQL), and 500-531 (DGITAVPAVAVFHRSKNWIAGGTASGKICLWM).

This sequence belongs to the WD repeat DDB2/WDR76 family.

Functionally, DNA-binding protein that binds to both single- and double-stranded DNA. Binds preferentially to UV-damaged DNA. May be involved in DNA-metabolic processes. The polypeptide is DNA damage-binding protein cmr1 (Aspergillus clavatus (strain ATCC 1007 / CBS 513.65 / DSM 816 / NCTC 3887 / NRRL 1 / QM 1276 / 107)).